We begin with the raw amino-acid sequence, 426 residues long: Glutamate-1-semialdehyde 2,1-aminomutase (426 aa).

Lysine 265 is modified (N6-(pyridoxal phosphate)lysine).

It belongs to the class-III pyridoxal-phosphate-dependent aminotransferase family. HemL subfamily. In terms of assembly, homodimer. Pyridoxal 5'-phosphate serves as cofactor.

It is found in the cytoplasm. It catalyses the reaction (S)-4-amino-5-oxopentanoate = 5-aminolevulinate. Its pathway is porphyrin-containing compound metabolism; protoporphyrin-IX biosynthesis; 5-aminolevulinate from L-glutamyl-tRNA(Glu): step 2/2. The protein is Glutamate-1-semialdehyde 2,1-aminomutase of Enterobacter sp. (strain 638).